Consider the following 209-residue polypeptide: Pyridoxal phosphate homeostasis protein (209 aa).

Lys-31 bears the N6-(pyridoxal phosphate)lysine mark.

This sequence belongs to the pyridoxal phosphate-binding protein YggS/PROSC family.

In terms of biological role, pyridoxal 5'-phosphate (PLP)-binding protein, which is involved in PLP homeostasis. The chain is Pyridoxal phosphate homeostasis protein from Deinococcus radiodurans (strain ATCC 13939 / DSM 20539 / JCM 16871 / CCUG 27074 / LMG 4051 / NBRC 15346 / NCIMB 9279 / VKM B-1422 / R1).